A 714-amino-acid polypeptide reads, in one-letter code: Phosphoribosylformylglycinamidine synthase subunit PurL (714 aa).

The active site involves histidine 34. An ATP-binding site is contributed by tyrosine 37. Glutamate 78 is a Mg(2+) binding site. Substrate contacts are provided by residues 79-82 (SHNH) and arginine 101. The Proton acceptor role is filled by histidine 80. Aspartate 102 is a Mg(2+) binding site. Glutamine 226 provides a ligand contact to substrate. Residue aspartate 254 participates in Mg(2+) binding. Position 298-300 (298-300 (ESQ)) interacts with substrate. The ATP site is built by aspartate 474 and glycine 511. Asparagine 512 provides a ligand contact to Mg(2+). A substrate-binding site is contributed by serine 514.

It belongs to the FGAMS family. As to quaternary structure, monomer. Part of the FGAM synthase complex composed of 1 PurL, 1 PurQ and 2 PurS subunits.

It localises to the cytoplasm. The enzyme catalyses N(2)-formyl-N(1)-(5-phospho-beta-D-ribosyl)glycinamide + L-glutamine + ATP + H2O = 2-formamido-N(1)-(5-O-phospho-beta-D-ribosyl)acetamidine + L-glutamate + ADP + phosphate + H(+). Its pathway is purine metabolism; IMP biosynthesis via de novo pathway; 5-amino-1-(5-phospho-D-ribosyl)imidazole from N(2)-formyl-N(1)-(5-phospho-D-ribosyl)glycinamide: step 1/2. Functionally, part of the phosphoribosylformylglycinamidine synthase complex involved in the purines biosynthetic pathway. Catalyzes the ATP-dependent conversion of formylglycinamide ribonucleotide (FGAR) and glutamine to yield formylglycinamidine ribonucleotide (FGAM) and glutamate. The FGAM synthase complex is composed of three subunits. PurQ produces an ammonia molecule by converting glutamine to glutamate. PurL transfers the ammonia molecule to FGAR to form FGAM in an ATP-dependent manner. PurS interacts with PurQ and PurL and is thought to assist in the transfer of the ammonia molecule from PurQ to PurL. The sequence is that of Phosphoribosylformylglycinamidine synthase subunit PurL from Methanothermobacter marburgensis (strain ATCC BAA-927 / DSM 2133 / JCM 14651 / NBRC 100331 / OCM 82 / Marburg) (Methanobacterium thermoautotrophicum).